The primary structure comprises 576 residues: Arginine--tRNA ligase (576 aa).

Positions 122-132 (PNVAKEMHVGH) match the 'HIGH' region motif.

This sequence belongs to the class-I aminoacyl-tRNA synthetase family. As to quaternary structure, monomer.

Its subcellular location is the cytoplasm. The catalysed reaction is tRNA(Arg) + L-arginine + ATP = L-arginyl-tRNA(Arg) + AMP + diphosphate. This chain is Arginine--tRNA ligase, found in Hamiltonella defensa subsp. Acyrthosiphon pisum (strain 5AT).